Reading from the N-terminus, the 184-residue chain is Acireductone dioxygenase 4 (184 aa).

Residues H86, H88, E92, and H131 each coordinate Fe(2+). Ni(2+) contacts are provided by H86, H88, E92, and H131.

Belongs to the acireductone dioxygenase (ARD) family. Fe(2+) is required as a cofactor. Requires Ni(2+) as cofactor.

The protein localises to the cytoplasm. It is found in the nucleus. The enzyme catalyses 1,2-dihydroxy-5-(methylsulfanyl)pent-1-en-3-one + O2 = 4-methylsulfanyl-2-oxobutanoate + formate + 2 H(+). The catalysed reaction is 1,2-dihydroxy-5-(methylsulfanyl)pent-1-en-3-one + O2 = 3-(methylsulfanyl)propanoate + CO + formate + 2 H(+). It participates in amino-acid biosynthesis; L-methionine biosynthesis via salvage pathway; L-methionine from S-methyl-5-thio-alpha-D-ribose 1-phosphate: step 5/6. Functionally, catalyzes 2 different reactions between oxygen and the acireductone 1,2-dihydroxy-3-keto-5-methylthiopentene (DHK-MTPene) depending upon the metal bound in the active site. Fe-containing acireductone dioxygenase (Fe-ARD) produces formate and 2-keto-4-methylthiobutyrate (KMTB), the alpha-ketoacid precursor of methionine in the methionine recycle pathway. Ni-containing acireductone dioxygenase (Ni-ARD) produces methylthiopropionate, carbon monoxide and formate, and does not lie on the methionine recycle pathway. In Oryza sativa subsp. japonica (Rice), this protein is Acireductone dioxygenase 4 (ARD4).